Consider the following 182-residue polypeptide: ATP synthase subunit delta (182 aa).

Belongs to the ATPase delta chain family. As to quaternary structure, F-type ATPases have 2 components, F(1) - the catalytic core - and F(0) - the membrane proton channel. F(1) has five subunits: alpha(3), beta(3), gamma(1), delta(1), epsilon(1). F(0) has three main subunits: a(1), b(2) and c(10-14). The alpha and beta chains form an alternating ring which encloses part of the gamma chain. F(1) is attached to F(0) by a central stalk formed by the gamma and epsilon chains, while a peripheral stalk is formed by the delta and b chains.

The protein resides in the cell inner membrane. In terms of biological role, f(1)F(0) ATP synthase produces ATP from ADP in the presence of a proton or sodium gradient. F-type ATPases consist of two structural domains, F(1) containing the extramembraneous catalytic core and F(0) containing the membrane proton channel, linked together by a central stalk and a peripheral stalk. During catalysis, ATP synthesis in the catalytic domain of F(1) is coupled via a rotary mechanism of the central stalk subunits to proton translocation. Its function is as follows. This protein is part of the stalk that links CF(0) to CF(1). It either transmits conformational changes from CF(0) to CF(1) or is implicated in proton conduction. This chain is ATP synthase subunit delta, found in Bdellovibrio bacteriovorus (strain ATCC 15356 / DSM 50701 / NCIMB 9529 / HD100).